Reading from the N-terminus, the 282-residue chain is 4-diphosphocytidyl-2-C-methyl-D-erythritol kinase (282 aa).

Residue Lys12 is part of the active site. Residue 95 to 105 coordinates ATP; that stretch reads PMGGGIGGGSS. Residue Asp137 is part of the active site.

This sequence belongs to the GHMP kinase family. IspE subfamily.

The enzyme catalyses 4-CDP-2-C-methyl-D-erythritol + ATP = 4-CDP-2-C-methyl-D-erythritol 2-phosphate + ADP + H(+). Its pathway is isoprenoid biosynthesis; isopentenyl diphosphate biosynthesis via DXP pathway; isopentenyl diphosphate from 1-deoxy-D-xylulose 5-phosphate: step 3/6. Functionally, catalyzes the phosphorylation of the position 2 hydroxy group of 4-diphosphocytidyl-2C-methyl-D-erythritol. The protein is 4-diphosphocytidyl-2-C-methyl-D-erythritol kinase of Pseudomonas aeruginosa (strain ATCC 15692 / DSM 22644 / CIP 104116 / JCM 14847 / LMG 12228 / 1C / PRS 101 / PAO1).